A 558-amino-acid polypeptide reads, in one-letter code: Rhamnogalacturonase B (558 aa).

The N-terminal stretch at 1–21 (MLLDKLSVLSFLGLAPIFAAA) is a signal peptide. A disulfide bond links cysteine 42 and cysteine 68. An N-linked (GlcNAc...) asparagine glycan is attached at asparagine 145. Aspartate 219 serves as the catalytic Proton donor. An intrachain disulfide couples cysteine 221 to cysteine 238. Residues asparagine 239 and asparagine 254 are each glycosylated (N-linked (GlcNAc...) asparagine). Histidine 294 is a catalytic residue. Asparagine 321 carries an N-linked (GlcNAc...) asparagine glycan. Cystine bridges form between cysteine 344-cysteine 350 and cysteine 372-cysteine 381. Residues 503–526 (VGAQEGSTTSAPSFAAPSGAGNSP) show a composition bias toward low complexity. Residues 503-558 (VGAQEGSTTSAPSFAAPSGAGNSPQGPTGASGFGEKGQQGEQGEQGEQGEQGVCYV) are disordered.

The protein belongs to the glycosyl hydrolase 28 family.

It localises to the secreted. The catalysed reaction is Endohydrolysis of alpha-D-GalA-(1-&gt;2)-alpha-L-Rha glycosidic bond in the rhamnogalacturonan I backbone with initial inversion of anomeric configuration releasing oligosaccharides with beta-D-GalA at the reducing end.. Pectinolytic enzymes consist of four classes of enzymes: pectine lyase, polygalacturonase, pectin methylesterase and rhamnogalacturonase. Hydrolyzes alpha-D-galacturonopyranosyl-(1,2)-alpha-L-rhamnopyranosyl linkages in the backbone of the hairy regions of pectins. The polypeptide is Rhamnogalacturonase B (rhgB) (Aspergillus niger).